Consider the following 282-residue polypeptide: DNA processing protein DprA (282 aa).

The protein belongs to the DprA/Smf family. In terms of assembly, homodimer; forms tail-to-tail dimers, forms nucleoprotein complex (NPC) which requires at least 30 nucleotides (nt) of ssDNA becoming optimal with 50 nt. Interacts with RecA, forms mixed DprA-RecA-ssDNA filaments. Interacts with ComFA and ComFC.

Its subcellular location is the cytoplasm. Functionally, protein that helps load RecA onto ssDNA during transformation. Required for DNA transformation. Not required for DNA uptake but for a later stage of transformation. Thought to interact at the cell pole with newly imported transforming ssDNA which it binds cooperatively, protecting linear and circular ssDNA from nuclease action. Forms bridges between DNA segments. Favors the loading of RecA onto ssDNA and formation of RecA-DNA filaments, triggering RecA-catalysis of ATP-driven homologous DNA pairing. In Streptococcus pneumoniae (strain ATCC BAA-255 / R6), this protein is DNA processing protein DprA.